We begin with the raw amino-acid sequence, 202 residues long: Probable thymidylate kinase (202 aa).

Position 13-20 (13-20 (GIDGSGKT)) interacts with ATP.

This sequence belongs to the thymidylate kinase family.

It catalyses the reaction dTMP + ATP = dTDP + ADP. The polypeptide is Probable thymidylate kinase (Picrophilus torridus (strain ATCC 700027 / DSM 9790 / JCM 10055 / NBRC 100828 / KAW 2/3)).